The sequence spans 117 residues: DNA-directed RNA polymerase subunit omega (117 aa).

Belongs to the RNA polymerase subunit omega family. The RNAP catalytic core consists of 2 alpha, 1 beta, 1 beta' and 1 omega subunit. When a sigma factor is associated with the core the holoenzyme is formed, which can initiate transcription.

The enzyme catalyses RNA(n) + a ribonucleoside 5'-triphosphate = RNA(n+1) + diphosphate. Promotes RNA polymerase assembly. Latches the N- and C-terminal regions of the beta' subunit thereby facilitating its interaction with the beta and alpha subunits. The chain is DNA-directed RNA polymerase subunit omega from Ruegeria pomeroyi (strain ATCC 700808 / DSM 15171 / DSS-3) (Silicibacter pomeroyi).